A 278-amino-acid chain; its full sequence is 3-methyl-2-oxobutanoate hydroxymethyltransferase (278 aa).

D43 and D82 together coordinate Mg(2+). 3-methyl-2-oxobutanoate is bound by residues 43-44 (DS), D82, and K112. Residue E114 coordinates Mg(2+). The active-site Proton acceptor is E181.

This sequence belongs to the PanB family. In terms of assembly, homodecamer; pentamer of dimers. Requires Mg(2+) as cofactor.

It is found in the cytoplasm. It carries out the reaction 3-methyl-2-oxobutanoate + (6R)-5,10-methylene-5,6,7,8-tetrahydrofolate + H2O = 2-dehydropantoate + (6S)-5,6,7,8-tetrahydrofolate. It functions in the pathway cofactor biosynthesis; (R)-pantothenate biosynthesis; (R)-pantoate from 3-methyl-2-oxobutanoate: step 1/2. Its function is as follows. Catalyzes the reversible reaction in which hydroxymethyl group from 5,10-methylenetetrahydrofolate is transferred onto alpha-ketoisovalerate to form ketopantoate. This Bacillus cereus (strain ATCC 14579 / DSM 31 / CCUG 7414 / JCM 2152 / NBRC 15305 / NCIMB 9373 / NCTC 2599 / NRRL B-3711) protein is 3-methyl-2-oxobutanoate hydroxymethyltransferase.